Reading from the N-terminus, the 86-residue chain is Cell division topological specificity factor (86 aa).

It belongs to the MinE family.

Functionally, prevents the cell division inhibition by proteins MinC and MinD at internal division sites while permitting inhibition at polar sites. This ensures cell division at the proper site by restricting the formation of a division septum at the midpoint of the long axis of the cell. This is Cell division topological specificity factor from Parasynechococcus marenigrum (strain WH8102).